Consider the following 123-residue polypeptide: UPF0102 protein Maqu_2464 (123 aa).

It belongs to the UPF0102 family.

This is UPF0102 protein Maqu_2464 from Marinobacter nauticus (strain ATCC 700491 / DSM 11845 / VT8) (Marinobacter aquaeolei).